A 91-amino-acid chain; its full sequence is MGRSLKKGPFIADSLLKKVEKQNSNDDRSVIKTWSRASTILPVMIGHTIAVHNGKSHIPVFITEQMVGHKLGEFAPTRTYKGHIKDKKGAR.

This sequence belongs to the universal ribosomal protein uS19 family.

Protein S19 forms a complex with S13 that binds strongly to the 16S ribosomal RNA. The protein is Small ribosomal subunit protein uS19 of Prochlorococcus marinus (strain MIT 9211).